The following is a 142-amino-acid chain: Endoribonuclease YbeY (142 aa).

3 residues coordinate Zn(2+): H107, H111, and D117.

The protein belongs to the endoribonuclease YbeY family. Zn(2+) serves as cofactor.

It localises to the cytoplasm. In terms of biological role, single strand-specific metallo-endoribonuclease involved in late-stage 70S ribosome quality control and in maturation of the 3' terminus of the 16S rRNA. The chain is Endoribonuclease YbeY from Chlorobium phaeobacteroides (strain DSM 266 / SMG 266 / 2430).